A 485-amino-acid chain; its full sequence is Glutamate--tRNA ligase (485 aa).

The 'HIGH' region motif lies at 11 to 21 (PSPTGHLHIGN). The short motif at 252-256 (KLSKR) is the 'KMSKS' region element. Lys255 contacts ATP.

The protein belongs to the class-I aminoacyl-tRNA synthetase family. Glutamate--tRNA ligase type 1 subfamily. As to quaternary structure, monomer.

It localises to the cytoplasm. The catalysed reaction is tRNA(Glu) + L-glutamate + ATP = L-glutamyl-tRNA(Glu) + AMP + diphosphate. Its function is as follows. Catalyzes the attachment of glutamate to tRNA(Glu) in a two-step reaction: glutamate is first activated by ATP to form Glu-AMP and then transferred to the acceptor end of tRNA(Glu). The chain is Glutamate--tRNA ligase from Bacillus thuringiensis (strain Al Hakam).